A 236-amino-acid polypeptide reads, in one-letter code: Peptidyl-prolyl cis-trans isomerase CYP21-4 (236 aa).

A helical; Signal-anchor for type II membrane protein transmembrane segment spans residues 22 to 42; the sequence is ISISTIIVCNLVVAVVILSLV. The disordered stretch occupies residues 52–71; the sequence is SRNTIEHETRSQRFEDTNTA. The span at 54–67 shows a compositional bias: basic and acidic residues; that stretch reads NTIEHETRSQRFED. The 151-residue stretch at 82 to 232 folds into the PPIase cyclophilin-type domain; the sequence is FADINTSKGL…SPIGITGVVL (151 aa). The N-linked (GlcNAc...) asparagine glycan is linked to N86.

This sequence belongs to the cyclophilin-type PPIase family. In terms of tissue distribution, ubiquitous.

The protein localises to the membrane. It carries out the reaction [protein]-peptidylproline (omega=180) = [protein]-peptidylproline (omega=0). PPIases accelerate the folding of proteins. It catalyzes the cis-trans isomerization of proline imidic peptide bonds in oligopeptides. This is Peptidyl-prolyl cis-trans isomerase CYP21-4 (CYP21-4) from Arabidopsis thaliana (Mouse-ear cress).